Consider the following 268-residue polypeptide: uncharacterized protein (268 aa).

Residues 21–61 (CVICLQKDGLRAQLSPCGHDQFDYSCICRWMDQSLTCPICK) form an RING-type; degenerate zinc finger.

It localises to the mitochondrion. The protein localises to the nucleus. This is an uncharacterized protein from Schizosaccharomyces pombe (strain 972 / ATCC 24843) (Fission yeast).